The chain runs to 251 residues: Orotidine 5'-phosphate decarboxylase (251 aa).

Substrate-binding positions include aspartate 19, lysine 42, 69 to 78 (DLKFHDIPNT), threonine 133, arginine 194, glutamine 204, glycine 224, and arginine 225. Lysine 71 acts as the Proton donor in catalysis.

The protein belongs to the OMP decarboxylase family. Type 1 subfamily. Homodimer.

The catalysed reaction is orotidine 5'-phosphate + H(+) = UMP + CO2. It functions in the pathway pyrimidine metabolism; UMP biosynthesis via de novo pathway; UMP from orotate: step 2/2. In terms of biological role, catalyzes the decarboxylation of orotidine 5'-monophosphate (OMP) to uridine 5'-monophosphate (UMP). This Syntrophus aciditrophicus (strain SB) protein is Orotidine 5'-phosphate decarboxylase.